The sequence spans 202 residues: HTH-type transcriptional regulator BetI (202 aa).

An HTH tetR-type domain is found at 8–68; the sequence is PIRRRQLIDA…ATMRDITRQL (61 aa). Positions 31–50 form a DNA-binding region, H-T-H motif; it reads TIAQIARRAGVSAGIISHYF.

The protein operates within amine and polyamine biosynthesis; betaine biosynthesis via choline pathway [regulation]. Its function is as follows. Repressor involved in the biosynthesis of the osmoprotectant glycine betaine. It represses transcription of the choline transporter BetT and the genes of BetAB involved in the synthesis of glycine betaine. In Cronobacter sakazakii (strain ATCC BAA-894) (Enterobacter sakazakii), this protein is HTH-type transcriptional regulator BetI.